The following is a 141-amino-acid chain: Hemoglobin subunit alpha-1 (141 aa).

A Globin domain is found at 1-141 (VLTDAEKKEV…VATVLTSKYR (141 aa)). His-58 provides a ligand contact to O2. His-87 lines the heme b pocket.

Belongs to the globin family. Heterotetramer of two alpha chains and two beta chains. In terms of tissue distribution, red blood cells.

Involved in oxygen transport from the lung to the various peripheral tissues. This Tachyglossus aculeatus aculeatus (Southeast Australian short-beaked echidna) protein is Hemoglobin subunit alpha-1.